A 770-amino-acid polypeptide reads, in one-letter code: MDFSKFLADDFDVKDWINAAFRAGPKDGAAGKADGHAATLVMKLQLFIQEVNHAVEETSLQALQNMPKVLRDVEALKQEASFLKEQMILVKEDIKKFEQDTSQSMQVLVEIDQVKSRMQLAAESLQEADKWSTLSADIEETFKTQDIAVISAKLTGMQSSLMMLVDTPDYSEKCVHLEALKNRLEALASPQIVAAFTSQSVDQSKVFVKVFTEIDRMPQLLAYYYKCHKVQLLATWQELCQRDLPLDRQLTGLYHALLGAWHTQTQWATQVFKNPYEVVTVLLIQTLGALVPSLPMCLSEAVERAGPELELTRLLEFYDTTAHFAKGLEMALLPHLQDHNLVKVVELVDAVYGPYKPYQLKYGDLEESNLLIQISAVPLEHGEVIDCVQELSQSVHKLFGLASAAVDRCAKFTNGLGTCGLLTALKSLFTKYVSHFTNALQSIRKKCKLDDIPPNSLFQEDWTAFQNSVRIIATCGELLRQCGDFEQQLANRILSTAGKYLSDSYSPRSLAGFQDSILTDKKSPAKNPWQEYNYLQKDNPAEYANLMEILYTLKEKGSSNHNLLSVSRTALTRLNQQAHQLAFDSVFLRIKQQLLLVSRMDSWNTAGIGETLTDDLPAFSLTPLEYISNIGQYIMSLPLNLEPFVTQEDSALELALHAGKLPFPPEQGEELPELDNMADNWLGSIARATMQTYCDGILQIPAVTPHSTKQLATDIDYLINVMDALGLQPSRTLQNIATLLKAKPEEYRQVSKGLPRRLAATVATMRGVNY.

Belongs to the COG7 family. Component of the conserved oligomeric Golgi complex which is composed of eight different subunits and is required for normal Golgi morphology and localization.

It localises to the golgi apparatus membrane. Its function is as follows. Required for normal Golgi function. The protein is Conserved oligomeric Golgi complex subunit 7 (Cog7) of Rattus norvegicus (Rat).